Consider the following 100-residue polypeptide: Envelope glycoprotein (100 aa).

The N-terminal stretch at 1-34 (MACSTLPKSPKDKIDPRDLLIPLILFLSLKGARS) is a signal peptide. Asparagine 46 carries N-linked (GlcNAc...) asparagine; by host glycosylation.

The protein localises to the virion membrane. This Myeloproliferative leukemia virus (MpLV) protein is Envelope glycoprotein (env).